The following is a 571-amino-acid chain: Proline--tRNA ligase (571 aa).

This sequence belongs to the class-II aminoacyl-tRNA synthetase family. ProS type 1 subfamily. In terms of assembly, homodimer.

It localises to the cytoplasm. It catalyses the reaction tRNA(Pro) + L-proline + ATP = L-prolyl-tRNA(Pro) + AMP + diphosphate. In terms of biological role, catalyzes the attachment of proline to tRNA(Pro) in a two-step reaction: proline is first activated by ATP to form Pro-AMP and then transferred to the acceptor end of tRNA(Pro). As ProRS can inadvertently accommodate and process non-cognate amino acids such as alanine and cysteine, to avoid such errors it has two additional distinct editing activities against alanine. One activity is designated as 'pretransfer' editing and involves the tRNA(Pro)-independent hydrolysis of activated Ala-AMP. The other activity is designated 'posttransfer' editing and involves deacylation of mischarged Ala-tRNA(Pro). The misacylated Cys-tRNA(Pro) is not edited by ProRS. The protein is Proline--tRNA ligase of Buchnera aphidicola subsp. Schizaphis graminum (strain Sg).